The following is a 348-amino-acid chain: Phosphate acyltransferase (348 aa).

Belongs to the PlsX family. Homodimer. Probably interacts with PlsY.

The protein resides in the cytoplasm. It catalyses the reaction a fatty acyl-[ACP] + phosphate = an acyl phosphate + holo-[ACP]. It functions in the pathway lipid metabolism; phospholipid metabolism. Its function is as follows. Catalyzes the reversible formation of acyl-phosphate (acyl-PO(4)) from acyl-[acyl-carrier-protein] (acyl-ACP). This enzyme utilizes acyl-ACP as fatty acyl donor, but not acyl-CoA. The protein is Phosphate acyltransferase of Francisella tularensis subsp. tularensis (strain FSC 198).